Consider the following 215-residue polypeptide: Redox-sensing transcriptional repressor Rex (215 aa).

Residues 18–57 constitute a DNA-binding region (H-T-H motif); it reads LYYRFLKNLHASGKQRVSSAELSDAVKVDSATIRRDFSYF. 92–97 provides a ligand contact to NAD(+); it reads GVGNLG.

Belongs to the transcriptional regulatory Rex family. As to quaternary structure, homodimer.

The protein localises to the cytoplasm. Functionally, modulates transcription in response to changes in cellular NADH/NAD(+) redox state. This is Redox-sensing transcriptional repressor Rex from Bacillus licheniformis (strain ATCC 14580 / DSM 13 / JCM 2505 / CCUG 7422 / NBRC 12200 / NCIMB 9375 / NCTC 10341 / NRRL NRS-1264 / Gibson 46).